Consider the following 440-residue polypeptide: Na(+)/H(+) antiporter NhaA (440 aa).

A run of 11 helical transmembrane segments spans residues 25 to 45 (FLHI…VALV), 76 to 96 (LHHV…GLEV), 112 to 132 (TLPI…YLSM), 141 to 161 (GWGI…AILG), 170 to 190 (VLLL…IAIG), 194 to 214 (SLDG…HFLS), 225 to 245 (VIVG…ATLI), 312 to 332 (HPWT…GVLI), 345 to 365 (VVIG…WLVI), 378 to 398 (WPIL…ALFI), and 414 to 434 (GVLV…LWTL).

The protein belongs to the NhaA Na(+)/H(+) (TC 2.A.33) antiporter family.

Its subcellular location is the cell inner membrane. It carries out the reaction Na(+)(in) + 2 H(+)(out) = Na(+)(out) + 2 H(+)(in). Functionally, na(+)/H(+) antiporter that extrudes sodium in exchange for external protons. This chain is Na(+)/H(+) antiporter NhaA, found in Rhodopirellula baltica (strain DSM 10527 / NCIMB 13988 / SH1).